A 263-amino-acid polypeptide reads, in one-letter code: Phosphatidylglycerol--prolipoprotein diacylglyceryl transferase (263 aa).

A run of 4 helical transmembrane segments spans residues 6–26, 50–70, 85–105, and 112–132; these read VIFS…VLGI, LLTA…VLIY, TWEG…AVII, and IPIF…LLLG. Residue R133 coordinates a 1,2-diacyl-sn-glycero-3-phospho-(1'-sn-glycerol). The next 3 helical transmembrane spans lie at 169 to 189, 197 to 217, and 233 to 253; these read LYEA…LFYL, GATT…VEFF, and MGQL…LGAL.

This sequence belongs to the Lgt family.

It localises to the cell membrane. The catalysed reaction is L-cysteinyl-[prolipoprotein] + a 1,2-diacyl-sn-glycero-3-phospho-(1'-sn-glycerol) = an S-1,2-diacyl-sn-glyceryl-L-cysteinyl-[prolipoprotein] + sn-glycerol 1-phosphate + H(+). The protein operates within protein modification; lipoprotein biosynthesis (diacylglyceryl transfer). Its function is as follows. Catalyzes the transfer of the diacylglyceryl group from phosphatidylglycerol to the sulfhydryl group of the N-terminal cysteine of a prolipoprotein, the first step in the formation of mature lipoproteins. The chain is Phosphatidylglycerol--prolipoprotein diacylglyceryl transferase from Wolbachia pipientis subsp. Culex pipiens (strain wPip).